A 304-amino-acid chain; its full sequence is Cbb3-type cytochrome c oxidase subunit CcoP (304 aa).

2 helical membrane passes run 11–31 (LYVAGITVVSLIFCLVVLIVA) and 61–81 (WWAGLFLVTIAFAVIYLALYP). Cytochrome c domains are found at residues 129-209 (QAMA…LSLS) and 216-296 (VAAQ…WSLS). The heme c site is built by C142, C145, H146, M185, C228, C231, H232, and M273.

This sequence belongs to the CcoP / FixP family. As to quaternary structure, component of the cbb3-type cytochrome c oxidase at least composed of CcoN, CcoO, CcoQ and CcoP. Heme c serves as cofactor.

It localises to the cell inner membrane. It functions in the pathway energy metabolism; oxidative phosphorylation. Functionally, C-type cytochrome. Part of the cbb3-type cytochrome c oxidase complex. CcoP subunit is required for transferring electrons from donor cytochrome c via its heme groups to CcoO subunit. From there, electrons are shuttled to the catalytic binuclear center of CcoN subunit where oxygen reduction takes place. The complex also functions as a proton pump. The protein is Cbb3-type cytochrome c oxidase subunit CcoP of Rubrivivax gelatinosus (Rhodocyclus gelatinosus).